We begin with the raw amino-acid sequence, 313 residues long: GMP synthase [glutamine-hydrolyzing] subunit B (313 aa).

The GMPS ATP-PPase domain maps to 6-190 (KVWEKFIEEK…LGLPEKIYNR (185 aa)). 33–39 (SGGVDSS) provides a ligand contact to ATP.

Heterodimer composed of a glutamine amidotransferase subunit (A) and a GMP-binding subunit (B).

It catalyses the reaction XMP + L-glutamine + ATP + H2O = GMP + L-glutamate + AMP + diphosphate + 2 H(+). It participates in purine metabolism; GMP biosynthesis; GMP from XMP (L-Gln route): step 1/1. Functionally, catalyzes the synthesis of GMP from XMP. This chain is GMP synthase [glutamine-hydrolyzing] subunit B (guaAB), found in Pyrococcus furiosus (strain ATCC 43587 / DSM 3638 / JCM 8422 / Vc1).